The following is a 214-amino-acid chain: MRIILLGAPGAGKGTQAQFIMEKYGIPQISTGDMLRAAVKSGSELGKQAKDIMDAGKLVTDELVIALVKERIAQEDCHNGFLLDGFPRTIPQADAMKEAGINVDYVLEFDVPDELIVDRIVGRRVHAPSGRVYHVKFNPPKVEGKDDVTGEELTTRKDDQEETVRKRLVEYHQMTAPLIGYYSKEAEAGNTKYAKVDGTKPVAEVRADLEKILG.

Position 10–15 (10–15 (GAGKGT)) interacts with ATP. The segment at 30-59 (STGDMLRAAVKSGSELGKQAKDIMDAGKLV) is NMP. Residues Thr31, Arg36, 57-59 (KLV), 85-88 (GFPR), and Gln92 contribute to the AMP site. The interval 122 to 159 (GRRVHAPSGRVYHVKFNPPKVEGKDDVTGEELTTRKDD) is LID. ATP-binding positions include Arg123 and 132–133 (VY). The AMP site is built by Arg156 and Arg167. An N6-acetyllysine modification is found at Lys192. Lys200 serves as a coordination point for ATP.

Belongs to the adenylate kinase family. As to quaternary structure, monomer.

The protein resides in the cytoplasm. The enzyme catalyses AMP + ATP = 2 ADP. It participates in purine metabolism; AMP biosynthesis via salvage pathway; AMP from ADP: step 1/1. Its function is as follows. Catalyzes the reversible transfer of the terminal phosphate group between ATP and AMP. Plays an important role in cellular energy homeostasis and in adenine nucleotide metabolism. The sequence is that of Adenylate kinase from Escherichia coli O8 (strain IAI1).